The following is a 125-amino-acid chain: Glycine cleavage system H protein (125 aa).

One can recognise a Lipoyl-binding domain in the interval 22-104 (VATVGITIHA…EGEGWLFKLK (83 aa)). Lys63 is subject to N6-lipoyllysine.

This sequence belongs to the GcvH family. In terms of assembly, the glycine cleavage system is composed of four proteins: P, T, L and H. It depends on (R)-lipoate as a cofactor.

In terms of biological role, the glycine cleavage system catalyzes the degradation of glycine. The H protein shuttles the methylamine group of glycine from the P protein to the T protein. The sequence is that of Glycine cleavage system H protein from Brucella abortus (strain 2308).